Reading from the N-terminus, the 779-residue chain is Pleckstrin homology domain-containing family A member 4 (779 aa).

The PH domain maps to 54-153; it reads PVHIRGWLHK…WLRALGKASR (100 aa). Disordered regions lie at residues 152–355, 495–669, and 694–766; these read SRAE…LPGP, AGLG…SGGH, and SPER…QEEG. Serine 164 bears the Phosphoserine mark. Residues 183-193 are compositionally biased toward basic and acidic residues; it reads VNRREEGRTSE. Composition is skewed to low complexity over residues 246–259 and 324–334; these read PRPR…PPLS and QSTQVSSGSST. A compositionally biased stretch (basic and acidic residues) spans 517–527; it reads QREESSERESL. The span at 528–540 shows a compositional bias: low complexity; the sequence is SESLELSSPQSPE. Serine 562 carries the post-translational modification Phosphoserine. The span at 567 to 580 shows a compositional bias: polar residues; sequence RASSPECRQQSSPL. 2 stretches are compositionally biased toward low complexity: residues 608 to 627 and 649 to 659; these read GLSL…RTLS and SSGSWSSPRHS. A compositionally biased stretch (polar residues) spans 720–740; it reads VTSSPTSHKANSATTGFSCQG.

The protein resides in the cytoplasm. It localises to the membrane. Binds specifically to phosphatidylinositol 3-phosphate (PtdIns3P), but not to other phosphoinositides. The chain is Pleckstrin homology domain-containing family A member 4 (Plekha4) from Rattus norvegicus (Rat).